The chain runs to 199 residues: Imidazoleglycerol-phosphate dehydratase (199 aa).

The protein belongs to the imidazoleglycerol-phosphate dehydratase family.

The protein resides in the cytoplasm. It carries out the reaction D-erythro-1-(imidazol-4-yl)glycerol 3-phosphate = 3-(imidazol-4-yl)-2-oxopropyl phosphate + H2O. Its pathway is amino-acid biosynthesis; L-histidine biosynthesis; L-histidine from 5-phospho-alpha-D-ribose 1-diphosphate: step 6/9. The polypeptide is Imidazoleglycerol-phosphate dehydratase (Bifidobacterium longum (strain NCC 2705)).